Here is a 600-residue protein sequence, read N- to C-terminus: Chaperone protein DnaK (600 aa).

A Phosphothreonine; by autocatalysis modification is found at Thr175. Positions 572-600 (FAQQTQQQDPNNQKDDVTEATVTDDSTKK) are disordered. The span at 591 to 600 (ATVTDDSTKK) shows a compositional bias: polar residues.

The protein belongs to the heat shock protein 70 family.

In terms of biological role, acts as a chaperone. The protein is Chaperone protein DnaK of Ureaplasma urealyticum serovar 10 (strain ATCC 33699 / Western).